The primary structure comprises 370 residues: MDHQSVVYNVYINQLNLYDCDYQKINMIEKFGPTIIVDQHVIVDTMSSIKTDSYKIDALKILLPMFMNPSLDVLLCVIDVISSDSYKIDAIKTLLQYCLEKPVDINIIEKYICCLGGDSYRLDAIIKLHTRLSTMDYSTVEQIIVLVRSDSYRLDVLKKISHKFEKQDAIKTINLIRSDSYKLDYILFVVDTKFLSLDESISLIDLLESNSYKSTYAEKIINTNSTITFNQIVQLTKDLPDTYRLGIADSFIKQLETFDTDNTDIFCQNLGKLTNYASYNQTVERLKIDKTISDKYKPCELTNTMSTSIFNLPVNSHNPLSINFIGNISPNAGTMVYKSIQENNGITTVTIKYSNGSSNIIMIDNNEKKN.

This is an uncharacterized protein from Acanthamoeba polyphaga (Amoeba).